A 257-amino-acid chain; its full sequence is Phosphonates import ATP-binding protein PhnC (257 aa).

The region spanning Ile-2–Ala-246 is the ABC transporter domain. Gly-35–Ser-42 contacts ATP.

The protein belongs to the ABC transporter superfamily. Phosphonates importer (TC 3.A.1.9.1) family. The complex is composed of two ATP-binding proteins (PhnC), two transmembrane proteins (PhnE) and a solute-binding protein (PhnD).

It is found in the cell membrane. It carries out the reaction phosphonate(out) + ATP + H2O = phosphonate(in) + ADP + phosphate + H(+). Part of the ABC transporter complex PhnCDE involved in phosphonates import. Responsible for energy coupling to the transport system. The protein is Phosphonates import ATP-binding protein PhnC of Bacillus cereus (strain ZK / E33L).